A 503-amino-acid chain; its full sequence is Probable DNA ligase (503 aa).

Glu210 contacts ATP. Lys212 functions as the N6-AMP-lysine intermediate in the catalytic mechanism. ATP-binding residues include Arg217, Arg232, Glu261, Phe296, Arg367, and Lys373.

It belongs to the ATP-dependent DNA ligase family. Mg(2+) serves as cofactor.

It catalyses the reaction ATP + (deoxyribonucleotide)n-3'-hydroxyl + 5'-phospho-(deoxyribonucleotide)m = (deoxyribonucleotide)n+m + AMP + diphosphate.. Functionally, DNA ligase that seals nicks in double-stranded DNA during DNA replication, DNA recombination and DNA repair. This chain is Probable DNA ligase, found in Rhodococcus opacus (strain B4).